The primary structure comprises 533 residues: Glucomannan 4-beta-mannosyltransferase 9 (533 aa).

Residues 37–57 form a helical membrane-spanning segment; sequence IVPALRLGVYICLTMSVMLFV. The active site involves D136. Positions 195 and 197 each coordinate substrate. Residue D289 is part of the active site. The next 4 membrane-spanning stretches (helical) occupy residues 368 to 388, 404 to 426, 483 to 503, and 510 to 530; these read LVAHIVTFIFYCVILPATVLV, VITLLNAVGTPRSLHLMVFWILF, VLELGVGMYLLFVGCYDAFFG, and YLFAQAIAFFIAGFGQIGTIV.

This sequence belongs to the glycosyltransferase 2 family. Plant cellulose synthase-like A subfamily. In terms of tissue distribution, expressed in cotyledons at the base of the hypocotyls, in root elongation zone, lateral root primordia, vascular system of young leaves, abscission zone of the pedicle,.

It localises to the golgi apparatus membrane. The enzyme catalyses GDP-mannose + (glucomannan)n = GDP + (glucomannan)n+1.. In terms of biological role, possesses glucomannan synthase and mannan synthase activities in vitro. Mannan synthase consists of a 4-beta-mannosyltransferase activity on mannan using GDP-mannose. The beta-1,4-mannan product is the backbone for galactomannan synthesis by galactomannan galactosyltransferase. Galactomannan is a noncellulosic polysaccharides of plant cell wall. Required for lateral root development. The polypeptide is Glucomannan 4-beta-mannosyltransferase 9 (Arabidopsis thaliana (Mouse-ear cress)).